We begin with the raw amino-acid sequence, 370 residues long: Caffeic acid 3-O-methyltransferase (370 aa).

The propeptide occupies 1–2 (MG). 135-141 (MNQDKVL) contacts substrate. The substrate binding stretch occupies residues 167-185 (AFEYHGTDPRFNKVFNRGM). S-adenosyl-L-methionine is bound by residues G213, D236, D256, M257, and K270. The active-site Proton acceptor is H274.

Belongs to the class I-like SAM-binding methyltransferase superfamily. Cation-independent O-methyltransferase family. COMT subfamily. Homodimer.

The catalysed reaction is (E)-caffeate + S-adenosyl-L-methionine = (E)-ferulate + S-adenosyl-L-homocysteine + H(+). Its pathway is aromatic compound metabolism; phenylpropanoid biosynthesis. Functionally, catalyzes the conversion of caffeic acid to ferulic acid and of 5-hydroxyferulic acid to sinapic acid. The resulting products may subsequently be converted to the corresponding alcohols that are incorporated into lignins. This Clarkia breweri (Fairy fans) protein is Caffeic acid 3-O-methyltransferase (COMT).